We begin with the raw amino-acid sequence, 109 residues long: Flagellar hook-basal body complex protein FliE (109 aa).

The protein belongs to the FliE family.

The protein localises to the bacterial flagellum basal body. The polypeptide is Flagellar hook-basal body complex protein FliE (Pseudomonas fluorescens (strain Pf0-1)).